The primary structure comprises 361 residues: Phosphoserine aminotransferase (361 aa).

Residue Arg42 coordinates L-glutamate. Pyridoxal 5'-phosphate contacts are provided by residues 76–77, Trp102, Thr152, Asp172, and Gln195; that span reads AT. Lys196 is modified (N6-(pyridoxal phosphate)lysine). 237 to 238 serves as a coordination point for pyridoxal 5'-phosphate; that stretch reads NT.

Belongs to the class-V pyridoxal-phosphate-dependent aminotransferase family. SerC subfamily. Homodimer. Pyridoxal 5'-phosphate serves as cofactor.

The protein resides in the cytoplasm. It carries out the reaction O-phospho-L-serine + 2-oxoglutarate = 3-phosphooxypyruvate + L-glutamate. The enzyme catalyses 4-(phosphooxy)-L-threonine + 2-oxoglutarate = (R)-3-hydroxy-2-oxo-4-phosphooxybutanoate + L-glutamate. It functions in the pathway amino-acid biosynthesis; L-serine biosynthesis; L-serine from 3-phospho-D-glycerate: step 2/3. The protein operates within cofactor biosynthesis; pyridoxine 5'-phosphate biosynthesis; pyridoxine 5'-phosphate from D-erythrose 4-phosphate: step 3/5. Catalyzes the reversible conversion of 3-phosphohydroxypyruvate to phosphoserine and of 3-hydroxy-2-oxo-4-phosphonooxybutanoate to phosphohydroxythreonine. This is Phosphoserine aminotransferase from Xanthomonas axonopodis pv. citri (strain 306).